The chain runs to 384 residues: 23S rRNA (uracil(747)-C(5))-methyltransferase RlmC (384 aa).

Residues Cys7, Cys15, Cys18, and Cys94 each coordinate [4Fe-4S] cluster. Residues Gln219, Phe248, Glu269, and Asn316 each coordinate S-adenosyl-L-methionine. The active-site Nucleophile is Cys343.

This sequence belongs to the class I-like SAM-binding methyltransferase superfamily. RNA M5U methyltransferase family. RlmC subfamily.

It catalyses the reaction uridine(747) in 23S rRNA + S-adenosyl-L-methionine = 5-methyluridine(747) in 23S rRNA + S-adenosyl-L-homocysteine + H(+). Its function is as follows. Catalyzes the formation of 5-methyl-uridine at position 747 (m5U747) in 23S rRNA. The sequence is that of 23S rRNA (uracil(747)-C(5))-methyltransferase RlmC from Shewanella sp. (strain MR-7).